Consider the following 217-residue polypeptide: Chorionic somatomammotropin hormone 1 (217 aa).

Positions 1 to 26 are cleaved as a signal peptide; it reads MAPGSRTSLLLAFALLCLPWLQEAGA. Residue His44 coordinates Zn(2+). Cys79 and Cys191 are disulfide-bonded. Glu200 provides a ligand contact to Zn(2+). Cys208 and Cys215 are disulfide-bonded.

This sequence belongs to the somatotropin/prolactin family. In terms of assembly, can be found in a monomeric as well as dimeric form.

The protein localises to the secreted. Its function is as follows. Produced only during pregnancy and is involved in stimulating lactation, fetal growth and metabolism. Does not interact with GHR but only activates PRLR through zinc-induced dimerization. The sequence is that of Chorionic somatomammotropin hormone 1 (CSH1) from Homo sapiens (Human).